The following is a 27-amino-acid chain: Secretin (27 aa).

At Leu27 the chain carries Leucine amide.

Belongs to the glucagon family.

The protein localises to the secreted. Its function is as follows. Hormone involved in different processes, such as regulation of the pH of the duodenal content, food intake and water homeostasis. Exerts its biological effects by binding to secretin receptor (SCTR), a G-protein coupled receptor expressed in the basolateral domain of several cells. Acts as a key gastrointestinal hormone by regulating the pH of the duodenal content. Secreted by S cells of the duodenum in the crypts of Lieberkuehn and regulates the pH of the duodenum by (1) inhibiting the secretion of gastric acid from the parietal cells of the stomach and (2) stimulating the production of bicarbonate (NaHCO(3)) from the ductal cells of the pancreas. Production of bicarbonate is essential to neutralize the pH and ensure no damage is done to the small intestine by the gastric acid. In addition to regulating the pH of the duodenal content, plays a central role in diet induced thermogenesis: acts as a non-sympathetic brown fat (BAT) activator mediating prandial thermogenesis, which consequentially induces satiation. Mechanistically, secretin released by the gut after a meal binds to secretin receptor (SCTR) in brown adipocytes, activating brown fat thermogenesis by stimulating lipolysis, which is sensed in the brain and promotes satiation. Also able to stimulate lipolysis in white adipocytes. Also plays an important role in cellular osmoregulation: released into the systemic circulation in response to hyperosmolality and acts at different levels in the hypothalamus, pituitary and kidney to regulate water homeostasis. Also plays a role in the central nervous system, possibly by acting as a neuropeptide hormone: required for hippocampal synaptic function and neural progenitor cells maintenance. The chain is Secretin from Oryctolagus cuniculus (Rabbit).